The sequence spans 314 residues: Glycerol-1-phosphate dehydrogenase [NAD(P)+] (314 aa).

Residues 52-56 and 74-77 contribute to the NAD(+) site; these read GKPLD and TSAS. Aspartate 79 contacts substrate. An NAD(+)-binding site is contributed by serine 83. Substrate is bound at residue aspartate 131. The Zn(2+) site is built by aspartate 131 and histidine 211. Residue histidine 215 participates in substrate binding. A Zn(2+)-binding site is contributed by histidine 231.

This sequence belongs to the glycerol-1-phosphate dehydrogenase family. It depends on Zn(2+) as a cofactor.

It localises to the cytoplasm. The catalysed reaction is sn-glycerol 1-phosphate + NAD(+) = dihydroxyacetone phosphate + NADH + H(+). The enzyme catalyses sn-glycerol 1-phosphate + NADP(+) = dihydroxyacetone phosphate + NADPH + H(+). It functions in the pathway membrane lipid metabolism; glycerophospholipid metabolism. Catalyzes the NAD(P)H-dependent reduction of dihydroxyacetonephosphate (DHAP or glycerone phosphate) to glycerol 1-phosphate (G1P). The G1P thus generated is used as the glycerophosphate backbone of phospholipids in the cellular membranes of Archaea. This chain is Glycerol-1-phosphate dehydrogenase [NAD(P)+], found in Korarchaeum cryptofilum (strain OPF8).